Reading from the N-terminus, the 341-residue chain is Lipoyl synthase (341 aa).

Positions 85, 90, 96, 111, 115, 118, and 325 each coordinate [4Fe-4S] cluster. Residues 97–314 (FSGGTATFMI…AEEGYKMGFK (218 aa)) form the Radical SAM core domain.

It belongs to the radical SAM superfamily. Lipoyl synthase family. Requires [4Fe-4S] cluster as cofactor.

It localises to the cytoplasm. It catalyses the reaction [[Fe-S] cluster scaffold protein carrying a second [4Fe-4S](2+) cluster] + N(6)-octanoyl-L-lysyl-[protein] + 2 oxidized [2Fe-2S]-[ferredoxin] + 2 S-adenosyl-L-methionine + 4 H(+) = [[Fe-S] cluster scaffold protein] + N(6)-[(R)-dihydrolipoyl]-L-lysyl-[protein] + 4 Fe(3+) + 2 hydrogen sulfide + 2 5'-deoxyadenosine + 2 L-methionine + 2 reduced [2Fe-2S]-[ferredoxin]. Its pathway is protein modification; protein lipoylation via endogenous pathway; protein N(6)-(lipoyl)lysine from octanoyl-[acyl-carrier-protein]: step 2/2. Catalyzes the radical-mediated insertion of two sulfur atoms into the C-6 and C-8 positions of the octanoyl moiety bound to the lipoyl domains of lipoate-dependent enzymes, thereby converting the octanoylated domains into lipoylated derivatives. This Pseudomonas fluorescens (strain SBW25) protein is Lipoyl synthase.